We begin with the raw amino-acid sequence, 127 residues long: uncharacterized protein (127 aa).

This is an uncharacterized protein from Homo sapiens (Human).